Here is a 152-residue protein sequence, read N- to C-terminus: D-aminoacyl-tRNA deacylase (152 aa).

The Gly-cisPro motif, important for rejection of L-amino acids motif lies at 142–143; sequence GP.

The protein belongs to the DTD family. Homodimer.

Its subcellular location is the cytoplasm. It carries out the reaction glycyl-tRNA(Ala) + H2O = tRNA(Ala) + glycine + H(+). The catalysed reaction is a D-aminoacyl-tRNA + H2O = a tRNA + a D-alpha-amino acid + H(+). An aminoacyl-tRNA editing enzyme that deacylates mischarged D-aminoacyl-tRNAs. Also deacylates mischarged glycyl-tRNA(Ala), protecting cells against glycine mischarging by AlaRS. Acts via tRNA-based rather than protein-based catalysis; rejects L-amino acids rather than detecting D-amino acids in the active site. By recycling D-aminoacyl-tRNA to D-amino acids and free tRNA molecules, this enzyme counteracts the toxicity associated with the formation of D-aminoacyl-tRNA entities in vivo and helps enforce protein L-homochirality. This Paraburkholderia phytofirmans (strain DSM 17436 / LMG 22146 / PsJN) (Burkholderia phytofirmans) protein is D-aminoacyl-tRNA deacylase.